The following is a 75-amino-acid chain: Sec-independent protein translocase protein TatA (75 aa).

A helical membrane pass occupies residues 1–21 (MGSFSIWHWLIVLVIVALVFG). Residues 44-75 (KDANSDKPAEQVTQQKVADDTIDVQAKEKTNS) form a disordered region.

It belongs to the TatA/E family. The Tat system comprises two distinct complexes: a TatABC complex, containing multiple copies of TatA, TatB and TatC subunits, and a separate TatA complex, containing only TatA subunits. Substrates initially bind to the TatABC complex, which probably triggers association of the separate TatA complex to form the active translocon.

It is found in the cell inner membrane. Functionally, part of the twin-arginine translocation (Tat) system that transports large folded proteins containing a characteristic twin-arginine motif in their signal peptide across membranes. TatA could form the protein-conducting channel of the Tat system. The protein is Sec-independent protein translocase protein TatA of Bordetella petrii (strain ATCC BAA-461 / DSM 12804 / CCUG 43448).